A 370-amino-acid chain; its full sequence is Queuine tRNA-ribosyltransferase (370 aa).

Residue aspartate 89 is the Proton acceptor of the active site. Substrate-binding positions include 89-93 (DSGGF), aspartate 143, glutamine 187, and glycine 214. The interval 245–251 (GVGKPEN) is RNA binding. Aspartate 264 acts as the Nucleophile in catalysis. The segment at 269-273 (TRNAR) is RNA binding; important for wobble base 34 recognition. Zn(2+)-binding residues include cysteine 302, cysteine 304, cysteine 307, and histidine 333.

The protein belongs to the queuine tRNA-ribosyltransferase family. Homodimer. Within each dimer, one monomer is responsible for RNA recognition and catalysis, while the other monomer binds to the replacement base PreQ1. The cofactor is Zn(2+).

It carries out the reaction 7-aminomethyl-7-carbaguanine + guanosine(34) in tRNA = 7-aminomethyl-7-carbaguanosine(34) in tRNA + guanine. Its pathway is tRNA modification; tRNA-queuosine biosynthesis. Catalyzes the base-exchange of a guanine (G) residue with the queuine precursor 7-aminomethyl-7-deazaguanine (PreQ1) at position 34 (anticodon wobble position) in tRNAs with GU(N) anticodons (tRNA-Asp, -Asn, -His and -Tyr). Catalysis occurs through a double-displacement mechanism. The nucleophile active site attacks the C1' of nucleotide 34 to detach the guanine base from the RNA, forming a covalent enzyme-RNA intermediate. The proton acceptor active site deprotonates the incoming PreQ1, allowing a nucleophilic attack on the C1' of the ribose to form the product. After dissociation, two additional enzymatic reactions on the tRNA convert PreQ1 to queuine (Q), resulting in the hypermodified nucleoside queuosine (7-(((4,5-cis-dihydroxy-2-cyclopenten-1-yl)amino)methyl)-7-deazaguanosine). This chain is Queuine tRNA-ribosyltransferase, found in Hamiltonella defensa subsp. Acyrthosiphon pisum (strain 5AT).